The chain runs to 171 residues: uncharacterized protein (171 aa).

The signal sequence occupies residues 1–24 (MIFDSLTMTQSSLSLLLLTGAIFS). Topologically, residues 25–70 (ISALYLTLFHRCATFSATSDLFLLVPLKFVSRDINDRLKTHYHHSC) are extracellular. A helical transmembrane segment spans residues 71–91 (LGSPFLCIIFLFISPLLNYHF). Over 92-140 (RSLVRPPKIHQKGSIPTLTKNAETRCSHHLKQAAATGEVCKVVVIIKGH) the chain is Cytoplasmic. The chain crosses the membrane as a helical span at residues 141–161 (ILKDCSIFFFIIFPLIYPLFI). Residues 162–171 (NCSSKYNGLQ) are Extracellular-facing.

The protein resides in the membrane. This is an uncharacterized protein from Saccharomyces cerevisiae (strain ATCC 204508 / S288c) (Baker's yeast).